The chain runs to 314 residues: Methionyl-tRNA formyltransferase (314 aa).

112-115 (SLLP) contacts (6S)-5,6,7,8-tetrahydrofolate.

This sequence belongs to the Fmt family.

The catalysed reaction is L-methionyl-tRNA(fMet) + (6R)-10-formyltetrahydrofolate = N-formyl-L-methionyl-tRNA(fMet) + (6S)-5,6,7,8-tetrahydrofolate + H(+). Attaches a formyl group to the free amino group of methionyl-tRNA(fMet). The formyl group appears to play a dual role in the initiator identity of N-formylmethionyl-tRNA by promoting its recognition by IF2 and preventing the misappropriation of this tRNA by the elongation apparatus. The polypeptide is Methionyl-tRNA formyltransferase (Tolumonas auensis (strain DSM 9187 / NBRC 110442 / TA 4)).